Here is a 505-residue protein sequence, read N- to C-terminus: Ion-translocating oxidoreductase complex subunit C (505 aa).

2 4Fe-4S ferredoxin-type domains span residues 381–410 (ELNN…EQLY) and 420–449 (KTQI…MSYY). Residues C390, C393, C396, C400, C429, C432, C435, and C439 each coordinate [4Fe-4S] cluster.

The protein belongs to the 4Fe4S bacterial-type ferredoxin family. RnfC subfamily. The complex is composed of six subunits: RnfA, RnfB, RnfC, RnfD, RnfE and RnfG. [4Fe-4S] cluster is required as a cofactor.

The protein localises to the cell inner membrane. In terms of biological role, part of a membrane-bound complex that couples electron transfer with translocation of ions across the membrane. In Buchnera aphidicola subsp. Baizongia pistaciae (strain Bp), this protein is Ion-translocating oxidoreductase complex subunit C.